Here is a 125-residue protein sequence, read N- to C-terminus: Casein kinase I isoform alpha (125 aa).

A Protein kinase domain is found at 1–125 (GEEVAVKLES…LIDFGLAKKY (125 aa)). Lysine 7 lines the ATP pocket. The Proton acceptor role is filled by aspartate 97.

It belongs to the protein kinase superfamily. CK1 Ser/Thr protein kinase family. Casein kinase I subfamily. In terms of assembly, interacts with the Axin complex. Interacts with TUT1, leading to TUT1 phosphorylation. Interacts with FAM83A, FAM83B, FAM83C, FAM83D, FAM83E, FAM83F, FAM83G and FAM83H (via DUF1669). Interaction with FAM83H recruits CSNK1A1 to keratin filaments. Post-translationally, phosphorylated by MTOR in response to mitogenic stimulation, leading to its activation.

The protein resides in the cytoplasm. Its subcellular location is the cytoskeleton. It is found in the microtubule organizing center. The protein localises to the centrosome. It localises to the chromosome. The protein resides in the centromere. Its subcellular location is the kinetochore. It is found in the nucleus speckle. The protein localises to the cilium basal body. It localises to the spindle. The catalysed reaction is L-seryl-[protein] + ATP = O-phospho-L-seryl-[protein] + ADP + H(+). It carries out the reaction L-threonyl-[protein] + ATP = O-phospho-L-threonyl-[protein] + ADP + H(+). Its function is as follows. Casein kinases are operationally defined by their preferential utilization of acidic proteins such as caseins as substrates. It can phosphorylate a large number of proteins. Participates in Wnt signaling. Phosphorylates CTNNB1 at 'Ser-45'. May phosphorylate PER1 and PER2. May play a role in segregating chromosomes during mitosis. May play a role in keratin cytoskeleton disassembly and thereby, it may regulate epithelial cell migration. Acts as a positive regulator of mTORC1 and mTORC2 signaling in response to nutrients by mediating phosphorylation of DEPTOR inhibitor. Acts as an inhibitor of NLRP3 inflammasome assembly by mediating phosphorylation of NLRP3. This chain is Casein kinase I isoform alpha (CSNK1A1), found in Sus scrofa (Pig).